The sequence spans 607 residues: Elongation factor 4 (607 aa).

Residues 11 to 193 (KSIRNFSIIA…QIVAKVPAPT (183 aa)) enclose the tr-type G domain. GTP-binding positions include 23–28 (DHGKST) and 140–143 (NKID).

The protein belongs to the TRAFAC class translation factor GTPase superfamily. Classic translation factor GTPase family. LepA subfamily.

The protein resides in the cell membrane. It carries out the reaction GTP + H2O = GDP + phosphate + H(+). Its function is as follows. Required for accurate and efficient protein synthesis under certain stress conditions. May act as a fidelity factor of the translation reaction, by catalyzing a one-codon backward translocation of tRNAs on improperly translocated ribosomes. Back-translocation proceeds from a post-translocation (POST) complex to a pre-translocation (PRE) complex, thus giving elongation factor G a second chance to translocate the tRNAs correctly. Binds to ribosomes in a GTP-dependent manner. This chain is Elongation factor 4, found in Exiguobacterium sibiricum (strain DSM 17290 / CCUG 55495 / CIP 109462 / JCM 13490 / 255-15).